Consider the following 663-residue polypeptide: DNA topoisomerase 4 subunit B (663 aa).

ATP-binding positions include Y7, N47, D74, 114-120, and K341; that span reads GLHGVGA. The interval 386–416 is disordered; sequence REAARKAREDARSGKKNKRKDTLLSGKLTPA. The span at 387 to 398 shows a compositional bias: basic and acidic residues; the sequence is EAARKAREDARS. The Toprim domain maps to 424–538; that stretch reads NELYLVEGDS…AGRVFIALPP (115 aa). Mg(2+) is bound by residues E430, D503, and D505.

The protein belongs to the type II topoisomerase family. ParE type 2 subfamily. In terms of assembly, heterotetramer composed of ParC and ParE. It depends on Mg(2+) as a cofactor. Mn(2+) is required as a cofactor. The cofactor is Ca(2+).

The enzyme catalyses ATP-dependent breakage, passage and rejoining of double-stranded DNA.. Functionally, topoisomerase IV is essential for chromosome segregation. It relaxes supercoiled DNA. Performs the decatenation events required during the replication of a circular DNA molecule. This is DNA topoisomerase 4 subunit B from Staphylococcus aureus (strain Mu50 / ATCC 700699).